Here is a 337-residue protein sequence, read N- to C-terminus: Glyceraldehyde-3-phosphate dehydrogenase 2 (337 aa).

NAD(+) is bound by residues 11–12 (RI), Asp-35, Arg-79, and Thr-121. D-glyceraldehyde 3-phosphate contacts are provided by residues 153–155 (SCT), Thr-184, Arg-199, 212–213 (TG), and Arg-235. The active-site Nucleophile is Cys-154. NAD(+) is bound at residue Asn-317.

Belongs to the glyceraldehyde-3-phosphate dehydrogenase family. Homotetramer.

It localises to the cytoplasm. The enzyme catalyses D-glyceraldehyde 3-phosphate + phosphate + NADP(+) = (2R)-3-phospho-glyceroyl phosphate + NADPH + H(+). It catalyses the reaction D-glyceraldehyde 3-phosphate + phosphate + NAD(+) = (2R)-3-phospho-glyceroyl phosphate + NADH + H(+). The protein operates within carbohydrate degradation; glycolysis; pyruvate from D-glyceraldehyde 3-phosphate: step 1/5. In terms of biological role, involved in photosynthetic carbon assimilation. Catalyzes the NAD(P)-dependent oxidative phosphorylation of glyceraldehyde 3-phosphate (G3P) to 1,3-bisphosphoglycerate (BPG). The first reaction step involves the formation of a hemiacetal intermediate between G3P and a cysteine residue, and this hemiacetal intermediate is then oxidized to a thioester, with concomitant reduction of NAD to NADH. The reduced NADH is then exchanged with the second NAD, and the thioester is attacked by a nucleophilic inorganic phosphate to produce BPG. It can use both NADP and NAD. The chain is Glyceraldehyde-3-phosphate dehydrogenase 2 (gap2) from Synechocystis sp. (strain ATCC 27184 / PCC 6803 / Kazusa).